Here is a 663-residue protein sequence, read N- to C-terminus: Polyunsaturated fatty acid lipoxygenase ALOX15 (663 aa).

Residues 2–115 form the PLAT domain; the sequence is GVYRIRVSTG…ILNLPEGTGC (114 aa). Residues 116–663 enclose the Lipoxygenase domain; sequence TVVEDSQGLF…PSLVENSVAI (548 aa). Fe cation contacts are provided by H361, H366, H541, H545, and I663.

It belongs to the lipoxygenase family. As to quaternary structure, interacts with PEBP1; in response to IL13/interleukin-13, prevents the interaction of PEBP1 with RAF1 to activate the ERK signaling cascade. It depends on Fe cation as a cofactor. As to expression, found in pituitary and pineal glands as well as leukocytes, kidney, aorta, small intestine and cornea. Also expressed by resident peritoneal macrophages (at protein level).

Its subcellular location is the cytoplasm. It is found in the cytosol. The protein localises to the cell membrane. It localises to the lipid droplet. The enzyme catalyses (5Z,8Z,11Z,14Z)-eicosatetraenoate + O2 = (12S)-hydroperoxy-(5Z,8Z,10E,14Z)-eicosatetraenoate. It catalyses the reaction (5Z,8Z,11Z,14Z)-eicosatetraenoate + O2 = (15S)-hydroperoxy-(5Z,8Z,11Z,13E)-eicosatetraenoate. It carries out the reaction (9Z,12Z)-octadecadienoate + O2 = (13S)-hydroperoxy-(9Z,11E)-octadecadienoate. The catalysed reaction is (5Z,8Z,11Z,14Z)-eicosatetraenoate + 2 O2 = (14R,15S)-dihydroperoxy-(5Z,8Z,10E,12E)-eicosatetraenoate. The enzyme catalyses (5Z,8Z,11Z,14Z)-eicosatetraenoate + 2 O2 = (8S,15S)-dihydroperoxy-(5Z,9E,11Z,13E)-eicosatetraenoate. It catalyses the reaction (14S,15R)-epoxy-(5Z,8Z,11Z)-eicosatrienoate + O2 = (8S)-hydroperoxy-(14S,15R)-epoxy-(5Z,9E,11Z)-eicosatrienoate. It carries out the reaction (14S,15R)-epoxy-(5Z,8Z,11Z)-eicosatrienoate + O2 = (12S)-hydroperoxy-(14S,15R)-epoxy-(5Z,8Z,10E)-eicosatrienoate. The catalysed reaction is (14R,15S)-epoxy-(5Z,8Z,11Z)-eicosatrienoate + O2 = (5S)-hydroperoxy-(14R,15S)-epoxy-(6E,8Z,11Z)-eicosatrienoate. The enzyme catalyses (14R,15S)-epoxy-(5Z,8Z,11Z)-eicosatrienoate + O2 = (12S)-hydroperoxy-(14R,15S)-epoxy-(5Z,8Z,10E)-eicosatrienoate. It catalyses the reaction (15R)-hydroperoxy-(5Z,8Z,11Z,13E)-eicosatetraenoate = 15-oxo-(5Z,8Z,11Z,13E)-eicosatetraenoate + H2O. It carries out the reaction (15S)-hydroperoxy-(5Z,8Z,11Z,13E)-eicosatetraenoate = (14S,15S)-epoxy-(5Z,8Z,10E,12E)-eicosatetraenoate + H2O. The catalysed reaction is (12S)-hydroperoxy-(5Z,8Z,10E,14Z)-eicosatetraenoate = (8S)-hydroxy-(11S,12S)-epoxy-(5Z,9E,14Z)-eicosatrienoate. The enzyme catalyses (4Z,7Z,10Z,13Z,16Z)-docosapentaenoate + O2 = 14-hydroperoxy-(4Z,7Z,10Z,12E,16Z)-docosapentaenoate. It catalyses the reaction (7Z,10Z,13Z,16Z,19Z)-docosapentaenoate + O2 = 14-hydroperoxy-(7Z,10Z,12E,16Z,19Z)-docosapentaenoate. It carries out the reaction (4Z,7Z,10Z,13Z,16Z,19Z)-docosahexaenoate + O2 = (14S)-hydroperoxy-(4Z,7Z,10Z,12E,16Z,19Z)-docosahexaenoate. The catalysed reaction is (4Z,7Z,10Z,13Z,16Z,19Z)-docosahexaenoate + O2 = (17S)-hydroperoxy-(4Z,7Z,10Z,13Z,15E,19Z)-docosahexaenoate. The enzyme catalyses (7S)-hydroperoxy-(4Z,8E,10Z,13Z,16Z,19Z)-docosahexaenoate + O2 = (7S,14S)-dihydroperoxy-(4Z,8E,10Z,12E,16Z,19Z)-docosahexaenoate. It catalyses the reaction (7S)-hydroperoxy-(4Z,8E,10Z,13Z,16Z,19Z)-docosahexaenoate + O2 = (7S,17S)-dihydroperoxy-(4Z,8E,10Z,13Z,15E,19Z)-docosahexaenoate. It carries out the reaction (4Z,7Z,10Z,13Z,16Z,19Z)-docosahexaenoate + O2 = (11S)-hydroperoxy-(4Z,7Z,9E,13Z,16Z,19Z)-docosahexaenoate. The catalysed reaction is N-(5Z,8Z,11Z,14Z)-eicosatetraenoyl-taurine + O2 = N-(12S)-hydroperoxy-(5Z,8Z,10E,14Z)-eicosatetraenoyl-taurine. The enzyme catalyses N-(5Z,8Z,11Z,14Z)-eicosatetraenoyl-gamma-aminobutanoate + O2 = N-(12S)-hydroperoxy-(5Z,8Z,10E,14Z)-eicosatetraenoyl-gamma-aminobutanoate. It catalyses the reaction N-(5Z,8Z,11Z,14Z)-eicosatetraenoyl-glycine + O2 = N-(12S)-hydroperoxy-(5Z,8Z,10E,14Z)-eicosatetraenoyl-glycine. It carries out the reaction N-(5Z,8Z,11Z,14Z)-eicosatetraenoyl-L-alanine + O2 = N-(12S)-hydroperoxy-(5Z,8Z,10E,14Z)-eicosatetraenoyl-alanine. The catalysed reaction is N-(5Z,8Z,11Z,14Z)-eicosatetraenoyl-taurine + O2 = N-(15S)-hydroperoxy-(5Z,8Z,11Z,13E)-eicosatetraenoyl-taurine. The enzyme catalyses N-(5Z,8Z,11Z,14Z)-eicosatetraenoyl-gamma-aminobutanoate + O2 = N-(15S)-hydroperoxy-(5Z,8Z,11Z,13E)-eicosatetraenoyl-gamma-aminobutanoate. It catalyses the reaction N-(5Z,8Z,11Z,14Z)-eicosatetraenoyl-glycine + O2 = N-(15S)-hydroperoxy-(5Z,8Z,11Z,13E)-eicosatetraenoyl-glycine. It carries out the reaction N-(5Z,8Z,11Z,14Z)-eicosatetraenoyl-L-alanine + O2 = N-(15S)-hydroperoxy-(5Z,8Z,11Z,13E)-eicosatetraenoyl-alanine. It participates in lipid metabolism; hydroperoxy eicosatetraenoic acid biosynthesis. Non-heme iron-containing dioxygenase that catalyzes the stereo-specific peroxidation of free and esterified polyunsaturated fatty acids generating a spectrum of bioactive lipid mediators. It inserts peroxyl groups at C12 or C15 of arachidonate ((5Z,8Z,11Z,14Z)-eicosatetraenoate) producing both 12-hydroperoxyeicosatetraenoate/12-HPETE and 15-hydroperoxyeicosatetraenoate/15-HPETE. It may then act on 12-HPETE to produce hepoxilins, which may show pro-inflammatory properties. Can also peroxidize linoleate ((9Z,12Z)-octadecadienoate) to 13-hydroperoxyoctadecadienoate. May participate in the sequential oxidations of DHA ((4Z,7Z,10Z,13Z,16Z,19Z)-docosahexaenoate) to generate specialized pro-resolving mediators (SPMs)like resolvin D5 ((7S,17S)-diHPDHA) and (7S,14S)-diHPDHA, that actively down-regulate the immune response and have anti-aggregation properties with platelets. Can convert epoxy fatty acids to hydroperoxy-epoxides derivatives followed by an intramolecular nucleophilic substitution leading to the formation of monocyclic endoperoxides. Plays an important role during the maintenance of self-tolerance by peroxidizing membrane-bound phosphatidylethanolamine which can then signal the sorting process for clearance of apoptotic cells during inflammation and prevent an autoimmune response. In addition to its role in the immune and inflammatory responses, this enzyme may play a role in epithelial wound healing in the cornea through production of lipoxin A4 (LXA(4)) and docosahexaenoic acid-derived neuroprotectin D1 (NPD1; 10R,17S-HDHA), both lipid autacoids exhibit anti-inflammatory and neuroprotective properties. Furthermore, it may regulate actin polymerization which is crucial for several biological processes such as the phagocytosis of apoptotic cells. It is also implicated in the generation of endogenous ligands for peroxisome proliferator activated receptor (PPAR-gamma), hence modulating macrophage development and function. It may also exert a negative effect on skeletal development by regulating bone mass through this pathway. As well as participates in ER stress and downstream inflammation in adipocytes, pancreatic islets, and liver. Finally, it is also involved in the cellular response to IL13/interleukin-13. This chain is Polyunsaturated fatty acid lipoxygenase ALOX15, found in Mus musculus (Mouse).